Here is a 425-residue protein sequence, read N- to C-terminus: AP-3 complex subunit mu (425 aa).

Residues Thr-175–Arg-423 enclose the MHD domain.

It belongs to the adaptor complexes medium subunit family.

Its subcellular location is the cytoplasm. It localises to the cytoskeleton. It is found in the microtubule organizing center. The protein localises to the spindle pole body. The protein resides in the membrane. Its subcellular location is the golgi apparatus. It localises to the cytoplasmic vesicle membrane. Functionally, part of the AP-3 complex, an adaptor-related complex which is not clathrin-associated. The complex is associated with the Golgi region as well as more peripheral structures. It facilitates the budding of vesicles from the Golgi membrane and may be directly involved in trafficking to the vacuole. The sequence is that of AP-3 complex subunit mu (apm3) from Schizosaccharomyces pombe (strain 972 / ATCC 24843) (Fission yeast).